Consider the following 335-residue polypeptide: Phosphate acyltransferase (335 aa).

It belongs to the PlsX family. As to quaternary structure, homodimer. Probably interacts with PlsY.

It is found in the cytoplasm. It catalyses the reaction a fatty acyl-[ACP] + phosphate = an acyl phosphate + holo-[ACP]. It participates in lipid metabolism; phospholipid metabolism. Its function is as follows. Catalyzes the reversible formation of acyl-phosphate (acyl-PO(4)) from acyl-[acyl-carrier-protein] (acyl-ACP). This enzyme utilizes acyl-ACP as fatty acyl donor, but not acyl-CoA. The protein is Phosphate acyltransferase of Streptococcus pyogenes serotype M1.